The sequence spans 306 residues: Protease HtpX homolog (306 aa).

Helical transmembrane passes span 10–30 (TTLL…ATGG) and 33–53 (QTLS…YWFS). Residue H135 participates in Zn(2+) binding. E136 is an active-site residue. H139 provides a ligand contact to Zn(2+). The next 2 membrane-spanning stretches (helical) occupy residues 149-169 (AIAS…MYFG) and 181-201 (GLGL…ASLI). E210 lines the Zn(2+) pocket.

It belongs to the peptidase M48B family. Zn(2+) serves as cofactor.

It localises to the cell membrane. This Bifidobacterium longum (strain NCC 2705) protein is Protease HtpX homolog.